The primary structure comprises 373 residues: S-adenosylmethionine:tRNA ribosyltransferase-isomerase (373 aa).

This sequence belongs to the QueA family. In terms of assembly, monomer.

It localises to the cytoplasm. It carries out the reaction 7-aminomethyl-7-carbaguanosine(34) in tRNA + S-adenosyl-L-methionine = epoxyqueuosine(34) in tRNA + adenine + L-methionine + 2 H(+). It participates in tRNA modification; tRNA-queuosine biosynthesis. Functionally, transfers and isomerizes the ribose moiety from AdoMet to the 7-aminomethyl group of 7-deazaguanine (preQ1-tRNA) to give epoxyqueuosine (oQ-tRNA). This is S-adenosylmethionine:tRNA ribosyltransferase-isomerase from Rhizobium etli (strain CIAT 652).